Consider the following 1863-residue polypeptide: Breast cancer type 1 susceptibility protein homolog (1863 aa).

The residue at position 1 (methionine 1) is an N-acetylmethionine. Residues 24 to 65 (CPICLELIKEPVSTKCDHIFCKFCMLKLLNQKKGPSQCPLCK) form an RING-type zinc finger. Lysine 109 is covalently cross-linked (Glycyl lysine isopeptide (Lys-Gly) (interchain with G-Cter in SUMO2)). The residue at position 114 (serine 114) is a Phosphoserine. The segment at 231 to 267 (TDVTNTEHHQPSNNDLNTTEKRATERHPEKYQGSSVS) is disordered. The span at 248–260 (TTEKRATERHPEK) shows a compositional bias: basic and acidic residues. Lysine 301 participates in a covalent cross-link: Glycyl lysine isopeptide (Lys-Gly) (interchain with G-Cter in SUMO2). Positions 306–338 (NKSKQPGLARSQHNRWAGSKETCNDRQTPSTEK) are disordered. A Glycyl lysine isopeptide (Lys-Gly) (interchain with G-Cter in SUMO2) cross-link involves residue lysine 339. Serine 395, serine 398, serine 423, and serine 434 each carry phosphoserine. Glycyl lysine isopeptide (Lys-Gly) (interchain with G-Cter in SUMO2) cross-links involve residues lysine 443, lysine 459, and lysine 519. Phosphoserine is present on serine 551. Glycyl lysine isopeptide (Lys-Gly) (interchain with G-Cter in SUMO2) cross-links involve residues lysine 583 and lysine 654. The disordered stretch occupies residues 650 to 735 (IKKKKYNQMP…LPREEKEEKL (86 aa)). Serine 694, serine 708, and serine 725 each carry phosphoserine. Positions 705 to 716 (APGSFTNCSNTS) are enriched in polar residues. Glycyl lysine isopeptide (Lys-Gly) (interchain with G-Cter in SUMO2) cross-links involve residues lysine 734 and lysine 739. Phosphoserine occurs at positions 753 and 840. Glycyl lysine isopeptide (Lys-Gly) (interchain with G-Cter in SUMO2) cross-links involve residues lysine 918 and lysine 987. At serine 988 the chain carries Phosphoserine; by CHEK2. Residue serine 1009 is modified to Phosphoserine. The interval 1045–1066 (NEVGSSTNEVGSSINEVGSSDE) is disordered. Lysine 1079 is covalently cross-linked (Glycyl lysine isopeptide (Lys-Gly) (interchain with G-Cter in SUMO2)). A phosphoserine mark is found at serine 1143, serine 1189, serine 1191, serine 1211, serine 1217, serine 1218, serine 1280, serine 1328, serine 1336, serine 1342, and serine 1387. Residues 1181–1216 (VQRGELSRSPSPFTHTHLAQGYRRGAKKLESSEENL) are disordered. A disordered region spans residues 1322 to 1394 (KQMRHQSESQ…LSSQSDILTT (73 aa)). Acidic residues predominate over residues 1342 to 1360 (SDDEERGTDLEENNQEEQG). Polar residues predominate over residues 1373 to 1394 (ESETSVSEDCSGLSSQSDILTT). Threonine 1394 is modified (phosphothreonine). The interval 1397-1424 (RDTMQDNLIKLQQEMAELEAVLEQHGSQ) is interaction with PALB2. Phosphoserine is present on residues serine 1423, serine 1457, serine 1524, and serine 1542. The segment at 1440 to 1504 (EDLRNPEQST…RSSPSKCPSL (65 aa)) is disordered. Positions 1445–1470 (PEQSTSEKAVLTSQKSSEYPISQNPE) are enriched in polar residues. Disordered regions lie at residues 1540–1597 (EESG…PSST) and 1610–1642 (SAQS…LTAS). Residues 1610–1624 (SAQSPAAAQTTNTAG) are compositionally biased toward polar residues. 2 BRCT domains span residues 1642–1736 (STER…DFEV) and 1756–1855 (QDRK…TYLI).

As to quaternary structure, heterodimer with BARD1. Part of the BRCA1-associated genome surveillance complex (BASC), which contains BRCA1, MSH2, MSH6, MLH1, ATM, BLM, PMS2 and the MRE11-RAD50-NBN protein (MRN) complex. This association could be a dynamic process changing throughout the cell cycle and within subnuclear domains. Component of the BRCA1-A complex, at least composed of BRCA1, BARD1, UIMC1/RAP80, ABRAXAS1, BRCC3/BRCC36, BABAM2 and BABAM1/NBA1. Interacts (via the BRCT domains) with ABRAXAS1 (phosphorylated form); this is important for recruitment to sites of DNA damage. Can form a heterotetramer with two molecules of ABRAXAS1 (phosphorylated form). Component of the BRCA1-RBBP8 complex. Interacts (via the BRCT domains) with RBBP8 ('Ser-327' phosphorylated form); the interaction ubiquitinates RBBP8, regulates CHEK1 activation, and involves RBBP8 in BRCA1-dependent G2/M checkpoint control on DNA damage. Associates with RNA polymerase II holoenzyme. Interacts with SMC1A, NELFB, DCLRE1C, CLSPN. CHEK1, CHEK2, BAP1, BRCC3, UBXN1 and PCLAF. Interacts (via BRCT domains) with BRIP1 (phosphorylated form). Interacts with FANCD2 (ubiquitinated form). Interacts with H2AX (phosphorylated on 'Ser-140'). Interacts (via the BRCT domains) with ACACA (phosphorylated form); the interaction prevents dephosphorylation of ACACA. Part of a BRCA complex containing BRCA1, BRCA2 and PALB2. Interacts directly with PALB2; the interaction is essential for its function in HRR. Interacts directly with BRCA2; the interaction occurs only in the presence of PALB2 which serves as the bridging protein. Interacts (via the BRCT domains) with LMO4; the interaction represses the transcriptional activity of BRCA1. Interacts (via the BRCT domains) with CCAR2 (via N-terminus); the interaction represses the transcriptional activator activity of BRCA1. Interacts with EXD2. Interacts (via C-terminus) with DHX9; this interaction is direct and links BRCA1 to the RNA polymerase II holoenzyme. Interacts with DNA helicase ZGRF1; the interaction is increased following DNA damage induction. Post-translationally, phosphorylated in response to IR, UV, and various stimuli that cause checkpoint activation, probably by ATM or ATR. Phosphorylation at Ser-988 by CHEK2 regulates mitotic spindle assembly. Phosphorylation by AURKA regulates centrosomal microtubule nucleation. In terms of processing, autoubiquitinated, undergoes 'Lys-6'-linked polyubiquitination. 'Lys-6'-linked polyubiquitination does not promote degradation.

It is found in the nucleus. Its subcellular location is the chromosome. The protein localises to the cytoplasm. The catalysed reaction is S-ubiquitinyl-[E2 ubiquitin-conjugating enzyme]-L-cysteine + [acceptor protein]-L-lysine = [E2 ubiquitin-conjugating enzyme]-L-cysteine + N(6)-ubiquitinyl-[acceptor protein]-L-lysine.. It functions in the pathway protein modification; protein ubiquitination. In terms of biological role, E3 ubiquitin-protein ligase that specifically mediates the formation of 'Lys-6'-linked polyubiquitin chains and plays a central role in DNA repair by facilitating cellular responses to DNA damage. It is unclear whether it also mediates the formation of other types of polyubiquitin chains. The BRCA1-BARD1 heterodimer coordinates a diverse range of cellular pathways such as DNA damage repair, ubiquitination and transcriptional regulation to maintain genomic stability. Regulates centrosomal microtubule nucleation. Required for appropriate cell cycle arrests after ionizing irradiation in both the S-phase and the G2 phase of the cell cycle. Required for FANCD2 targeting to sites of DNA damage. Inhibits lipid synthesis by binding to inactive phosphorylated ACACA and preventing its dephosphorylation. Contributes to homologous recombination repair (HRR) via its direct interaction with PALB2, fine-tunes recombinational repair partly through its modulatory role in the PALB2-dependent loading of BRCA2-RAD51 repair machinery at DNA breaks. Component of the BRCA1-RBBP8 complex which regulates CHEK1 activation and controls cell cycle G2/M checkpoints on DNA damage via BRCA1-mediated ubiquitination of RBBP8. Acts as a transcriptional activator. This is Breast cancer type 1 susceptibility protein homolog (BRCA1) from Pongo pygmaeus (Bornean orangutan).